The chain runs to 256 residues: GCN5-related N-acetyltransferase 10, chloroplastic (256 aa).

The N-terminal 41 residues, 1 to 41 (MGHLPQSLYSAAGPKFPYPGSSGLGVDQRKLTWSRFPVFLR), are a transit peptide targeting the chloroplast. Residues 106 to 256 (FMFFQAEVLS…RRVLMSKRFS (151 aa)) form the N-acetyltransferase domain. Acetyl-CoA contacts are provided by residues 178–180 (LAV), 186–191 (RKKMAS), 217–219 (DAA), and Tyr-224. Tyr-224 (proton donor) is an active-site residue.

This sequence belongs to the acetyltransferase family. GNAT subfamily. As to quaternary structure, oligomer. Post-translationally, autoacetylated. In terms of tissue distribution, expressed in green tissues.

It is found in the plastid. It localises to the chloroplast. The enzyme catalyses an N-terminal L-alpha-aminoacyl-[protein] + acetyl-CoA = N-terminal N(alpha)-acetyl-L-alpha-aminoacyl-[protein] + CoA + H(+). The catalysed reaction is L-lysyl-[protein] + acetyl-CoA = N(6)-acetyl-L-lysyl-[protein] + CoA + H(+). It catalyses the reaction N-terminal L-methionyl-[protein] + acetyl-CoA = N-terminal N(alpha)-acetyl-L-methionyl-[protein] + CoA + H(+). It carries out the reaction N-terminal L-seryl-[protein] + acetyl-CoA = N-terminal N(alpha)-acetyl-L-seryl-[protein] + CoA + H(+). The enzyme catalyses N-terminal L-valyl-[protein] + acetyl-CoA = N-terminal N(alpha)-acetyl-L-valyl-[protein] + CoA + H(+). The catalysed reaction is N-terminal L-threonyl-[protein] + acetyl-CoA = N-terminal N(alpha)-acetyl-L-threonyl-[protein] + CoA + H(+). It catalyses the reaction N-terminal L-alanyl-[protein] + acetyl-CoA = N-terminal N(alpha)-acetyl-L-alanyl-[protein] + CoA + H(+). It carries out the reaction N-terminal glycyl-[protein] + acetyl-CoA = N-terminal N(alpha)-acetylglycyl-[protein] + CoA + H(+). Protein acetyltransferase with dual specificity triggering both N-alpha-acetylation (NTA), with a preference for leucine, methionine, serine, valine and to a lower extent threonine and alanine as substrates (can also use glycine), and epsilon-lysine acetylation (KA) of several plastid proteins. The chain is GCN5-related N-acetyltransferase 10, chloroplastic from Arabidopsis thaliana (Mouse-ear cress).